We begin with the raw amino-acid sequence, 178 residues long: Large ribosomal subunit protein uL6 (178 aa).

The protein belongs to the universal ribosomal protein uL6 family. Part of the 50S ribosomal subunit.

Functionally, this protein binds to the 23S rRNA, and is important in its secondary structure. It is located near the subunit interface in the base of the L7/L12 stalk, and near the tRNA binding site of the peptidyltransferase center. The chain is Large ribosomal subunit protein uL6 from Nautilia profundicola (strain ATCC BAA-1463 / DSM 18972 / AmH).